The primary structure comprises 30 residues: Vitri peptide A (30 aa).

The cyclopeptide (Gly-Asn) cross-link spans 1-30; that stretch reads GIPCGESCVWIPCITSAIGCSCKSKVCYRN. 3 disulfides stabilise this stretch: Cys-4–Cys-20, Cys-8–Cys-22, and Cys-13–Cys-27.

This is a cyclic peptide.

Functionally, probably participates in a plant defense mechanism. Has strong cytotoxic activity against human lymphoma U-937 GTB and human myeloma RPMI-8226/s cell lines. The chain is Vitri peptide A from Viola arvensis (European field pansy).